Consider the following 493-residue polypeptide: tRNA(Ile)-lysidine synthase, chloroplastic (493 aa).

Residue 68 to 73 (SGGQDS) participates in ATP binding.

This sequence belongs to the tRNA(Ile)-lysidine synthase family.

The protein resides in the plastid. It localises to the chloroplast. The enzyme catalyses cytidine(34) in tRNA(Ile2) + L-lysine + ATP = lysidine(34) in tRNA(Ile2) + AMP + diphosphate + H(+). In terms of biological role, ligates lysine onto the cytidine present at position 34 of the AUA codon-specific tRNA(Ile) that contains the anticodon CAU, in an ATP-dependent manner. Cytidine is converted to lysidine, thus changing the amino acid specificity of the tRNA from methionine to isoleucine. The sequence is that of tRNA(Ile)-lysidine synthase, chloroplastic from Staurastrum punctulatum (Green alga).